Reading from the N-terminus, the 444-residue chain is E1B 55 kDa protein (444 aa).

The interval 1-35 (MEQNADMEPDRQVNQRPPRFRARGAGVRGRGRVRR) is disordered. Phosphoserine is present on residues Ser-438 and Ser-439.

This sequence belongs to the adenoviridae E1B 55 kDa protein family. As to quaternary structure, interacts with host PML-4 and PML-5; this interaction promotes efficient subnuclear targeting of E1B-55K to PML nuclear bodies. Interacts with E4-ORF3 protein. Interacts with E4-ORF6 protein.

It is found in the host nucleus. Its subcellular location is the host cytoplasm. Its function is as follows. Plays a major role to prevent cellular inhibition of viral genome replication. Assembles an SCF-like E3 ubiquitin ligase complex based on the cellular proteins ELOB, ELOC, CUL5 and RBX1, in cooperation with viral E4orf6. This viral RING-type ligase ubiquitinates cellular substrates and targets them to proteasomal degradation: TP53/p53, LIG4, MRE11-RAD50-NBS1 (MRN) complex, ITGA3, DAXX and BLM. E1B-55K probably acts as the substrate-specific adapter of the SCF-like E3 ubiquitin ligase complex. Degradation of host TP53/p53 activity is essential for preventing E1A-induced TP53 accumulation that would otherwise lead to cell apoptosis and growth arrest. E1B-55K also inactivates TP53 transcription-factor activity by binding its transactivation domain. E1B-55K also functions as a SUMO1 E3 ligase for TP53 which causes the latter to be sequestered in promyelocytic leukemia (PML) nuclear bodies thereby contributing to maximal inhibition of TP53 function. This chain is E1B 55 kDa protein, found in Canis lupus familiaris (Dog).